We begin with the raw amino-acid sequence, 133 residues long: Putative biopolymer transport protein ExbD-like 1 (133 aa).

Residues 1-15 (MNYDNYWDEDKPELN) lie on the Cytoplasmic side of the membrane. The helical transmembrane segment at 16 to 32 (ITPLVDVMLVLLAILMV) threads the bilayer. Residues 33 to 133 (TTPTLTYKEE…FLKVSLITSP (101 aa)) lie on the Periplasmic side of the membrane.

The protein belongs to the ExbD/TolR family.

It localises to the cell inner membrane. This chain is Putative biopolymer transport protein ExbD-like 1, found in Helicobacter pylori (strain J99 / ATCC 700824) (Campylobacter pylori J99).